We begin with the raw amino-acid sequence, 107 residues long: Protein Asterix (107 aa).

Over residues 1 to 15 the composition is skewed to polar residues; it reads MSHSHGNASSVNDPR. The interval 1–25 is disordered; that stretch reads MSHSHGNASSVNDPRQPSAAKPYIP. A helical transmembrane segment spans residues 82 to 98; the sequence is ISMAMMFAIMGLVTNYL.

Belongs to the Asterix family.

It is found in the membrane. The sequence is that of Protein Asterix from Arabidopsis thaliana (Mouse-ear cress).